The following is a 254-amino-acid chain: Transcription factor CAULIFLOWER (254 aa).

Residues 1–61 form the MADS-box domain; the sequence is MGRGRVEMKR…GKLFEYSSES (61 aa). The K-box domain maps to 90–180; sequence QTNWSMEYSR…TKQIKERESI (91 aa). Over residues 182–191 the composition is skewed to polar residues; the sequence is RTHQNQSEQQ. Residues 182–205 form a disordered region; that stretch reads RTHQNQSEQQNRSHHVAPQPQPQL.

Homodimer capable of binding to CArG-box sequences.

It localises to the nucleus. Its function is as follows. Probable transcription factor that promotes early floral meristem identity in synergy with APETALA1, FRUITFULL and LEAFY. Is required subsequently for the transition of an inflorescence meristem into a floral meristem. Seems to be partially redundant to the function of APETALA1. The sequence is that of Transcription factor CAULIFLOWER (CAL) from Brassica rapa subsp. chinensis (Pak-choi).